The primary structure comprises 421 residues: UDP-N-acetylglucosamine 1-carboxyvinyltransferase (421 aa).

A phosphoenolpyruvate-binding site is contributed by 22–23 (KN). R94 serves as a coordination point for UDP-N-acetyl-alpha-D-glucosamine. C118 (proton donor) is an active-site residue. C118 carries the post-translational modification 2-(S-cysteinyl)pyruvic acid O-phosphothioketal. UDP-N-acetyl-alpha-D-glucosamine-binding positions include 163 to 166 (KVSV), D308, and I330.

The protein belongs to the EPSP synthase family. MurA subfamily.

Its subcellular location is the cytoplasm. It catalyses the reaction phosphoenolpyruvate + UDP-N-acetyl-alpha-D-glucosamine = UDP-N-acetyl-3-O-(1-carboxyvinyl)-alpha-D-glucosamine + phosphate. It functions in the pathway cell wall biogenesis; peptidoglycan biosynthesis. Cell wall formation. Adds enolpyruvyl to UDP-N-acetylglucosamine. The polypeptide is UDP-N-acetylglucosamine 1-carboxyvinyltransferase (Orientia tsutsugamushi (strain Boryong) (Rickettsia tsutsugamushi)).